We begin with the raw amino-acid sequence, 173 residues long: Glutamyl-tRNA(Gln) amidotransferase subunit C-1, mitochondrial (173 aa).

Residues Met1–Phe23 constitute a mitochondrion transit peptide. Residues Pro51–Pro70 are disordered. A compositionally biased stretch (polar residues) spans Ser61 to Pro70.

It belongs to the GatC family. Subunit of the heterotrimeric GatCAB amidotransferase (AdT) complex, composed of A, B and C subunits.

Its subcellular location is the mitochondrion. The catalysed reaction is L-glutamyl-tRNA(Gln) + L-glutamine + ATP + H2O = L-glutaminyl-tRNA(Gln) + L-glutamate + ADP + phosphate + H(+). In terms of biological role, allows the formation of correctly charged Gln-tRNA(Gln) through the transamidation of misacylated Glu-tRNA(Gln) in the mitochondria. The reaction takes place in the presence of glutamine and ATP through an activated gamma-phospho-Glu-tRNA(Gln). This is Glutamyl-tRNA(Gln) amidotransferase subunit C-1, mitochondrial from Culex quinquefasciatus (Southern house mosquito).